A 360-amino-acid chain; its full sequence is Peptide chain release factor 1 (360 aa).

N5-methylglutamine is present on Q235.

The protein belongs to the prokaryotic/mitochondrial release factor family. Methylated by PrmC. Methylation increases the termination efficiency of RF1.

The protein resides in the cytoplasm. Its function is as follows. Peptide chain release factor 1 directs the termination of translation in response to the peptide chain termination codons UAG and UAA. In Delftia acidovorans (strain DSM 14801 / SPH-1), this protein is Peptide chain release factor 1.